We begin with the raw amino-acid sequence, 428 residues long: Cytokine-dependent hematopoietic cell linker (428 aa).

Positions 1–22 are disordered; it reads MNRQGNRKTTKEGSNDLKFQNF. Phosphotyrosine; by LYN occurs at positions 69 and 96. Disordered regions lie at residues 135 to 198 and 244 to 271; these read DKPI…EVQR and SSSF…PQRC. Residues 159 to 164 are mediates interaction with PLCG1; essential for BCR signaling; involved in restoration of BCR-induced calcium response and ERK2 and JNK2 activation in BLNK-deficient cells expressing LAT; it reads PLPPPR. The tract at residues 178 to 180 is mediates interaction with LAT, GRB2, and FGR; involved in translocation to the glycolipid-enriched microdomain and restoration of BCR-induced calcium response in BLNK-deficient DT40 cells expressing LAT; that stretch reads PEP. Residues 244–253 are compositionally biased toward low complexity; sequence SSSFTTSNHS. Positions 309–419 constitute an SH2 domain; that stretch reads WYIGEYSRQA…RKQCHLTQPL (111 aa).

When phosphorylated, interacts with PLCG1, PLCG2, GRB2, VAV and LAT. Interacts with LBR and AGO2. Interacts with FGR. Part of a complex consisting of CLNK, SKAP1 and FYB1. Interacts (via SH2 domain) with FYB1; this interaction allows SKAP1 and FYB1 to promote tyrosine phosphorylation of CLNK by LYN. Interacts (via SH2 domain) with MAP4K1. In terms of processing, tyrosine-phosphorylated upon BCR cross-linking. Tyrosine phosphorylation at both Tyr-69 and Tyr-96 are required for BCR-induced calcium response and are essential to restore PLCG2-mediated signaling in BLNK-deficient DT40 cells, but this phosphorylation is dispensable in cells expressing LAT. Interacts with the SH2 domain of PLCG1 via phosphorylated Tyr-96. Tyrosine phosphorylation is increased when complexed with SKAP1 and FYB1.

It localises to the cytoplasm. An adapter protein which plays a role in the regulation of immunoreceptor signaling, including PLC-gamma-mediated B-cell antigen receptor (BCR) signaling and FC-epsilon R1-mediated mast cell degranulation. Together with FGR, it acts as a negative regulator of natural killer cell-activating receptors and inhibits interferon-gamma production. Acts as a positive regulator of both T-cell receptor and natural killer T (NKT) cell receptor signaling in CD4-positive NKT cells. Together with MAP4K1, it enhances CD3-triggered activation of T-cells and subsequent IL2 production. May be involved in tumor necrosis factor induced cell death by promoting reactive oxidative species generation, and MLKL oligomerization, ultimately leading to necrosis. Involved in phosphorylation of LAT. May be involved in high affinity immunoglobulin epsilon receptor signaling in mast cells. This chain is Cytokine-dependent hematopoietic cell linker (CLNK), found in Homo sapiens (Human).